Here is a 91-residue protein sequence, read N- to C-terminus: Large ribosomal subunit protein bL31B (91 aa).

It belongs to the bacterial ribosomal protein bL31 family. Type B subfamily. In terms of assembly, part of the 50S ribosomal subunit.

This chain is Large ribosomal subunit protein bL31B, found in Neisseria meningitidis serogroup A / serotype 4A (strain DSM 15465 / Z2491).